A 612-amino-acid polypeptide reads, in one-letter code: Kelch repeat and BTB domain-containing protein 3 (612 aa).

The BTB domain occupies 52-119 (YDFKIIMKDE…AYTGKTKITD (68 aa)). The BACK domain occupies 154–254 (CLQLLSISDS…QLSEETLQDC (101 aa)). 5 Kelch repeats span residues 295-341 (KYIF…SSYG), 343-403 (KIFL…MALD), 404-454 (RLFV…TCQN), 456-506 (IYVL…KAVP), and 552-599 (KIYI…VIQF).

The sequence is that of Kelch repeat and BTB domain-containing protein 3 from Homo sapiens (Human).